Consider the following 172-residue polypeptide: Co-chaperone protein HscB (172 aa).

The J domain occupies 2–74; that stretch reads DYFTLFGLPI…LKRAEYMLSL (73 aa).

This sequence belongs to the HscB family. Interacts with HscA and stimulates its ATPase activity. Interacts with IscU.

In terms of biological role, co-chaperone involved in the maturation of iron-sulfur cluster-containing proteins. Seems to help targeting proteins to be folded toward HscA. This chain is Co-chaperone protein HscB, found in Pectobacterium atrosepticum (strain SCRI 1043 / ATCC BAA-672) (Erwinia carotovora subsp. atroseptica).